Consider the following 247-residue polypeptide: Protein Thf1 (247 aa).

Residues Ile198–Glu224 are a coiled coil. A disordered region spans residues Leu209 to Ser247. A compositionally biased stretch (basic and acidic residues) spans Glu210–Ser226. Positions Asp228–Ser247 are enriched in polar residues.

Belongs to the THF1 family.

May be involved in photosynthetic membrane biogenesis. This Acaryochloris marina (strain MBIC 11017) protein is Protein Thf1.